Consider the following 702-residue polypeptide: Elongation factor G (702 aa).

The tr-type G domain occupies 8-196 (ERYRNIGISA…MKAIIWDEAS (189 aa)). Residues 17–24 (AHIDAGKT), 88–92 (DTPGH), and 142–145 (NKMD) contribute to the GTP site.

This sequence belongs to the TRAFAC class translation factor GTPase superfamily. Classic translation factor GTPase family. EF-G/EF-2 subfamily.

The protein localises to the cytoplasm. Functionally, catalyzes the GTP-dependent ribosomal translocation step during translation elongation. During this step, the ribosome changes from the pre-translocational (PRE) to the post-translocational (POST) state as the newly formed A-site-bound peptidyl-tRNA and P-site-bound deacylated tRNA move to the P and E sites, respectively. Catalyzes the coordinated movement of the two tRNA molecules, the mRNA and conformational changes in the ribosome. In Thiomonas delicata (Thiomonas cuprina), this protein is Elongation factor G (fusA).